The sequence spans 904 residues: Translation initiation factor IF-2 (904 aa).

Disordered regions lie at residues 103–122 (YVKS…PDEE), 137–252 (NLEE…MVAG), and 267–315 (HLSA…FERP). Residues 137-177 (NLEEQQRLAESDRVRDEAIQRKREEEQAAKDRAEAERKAAE) show a composition bias toward basic and acidic residues. 2 stretches are compositionally biased toward low complexity: residues 178-230 (EAAA…AAPA) and 280-293 (RGKP…SSSR). One can recognise a tr-type G domain in the interval 403 to 572 (SRPPVVTIMG…SLQAEVLELK (170 aa)). Residues 412–419 (GHVDHGKT) form a G1 region. Position 412 to 419 (412 to 419 (GHVDHGKT)) interacts with GTP. The tract at residues 437-441 (GITQH) is G2. Positions 458–461 (DTPG) are G3. GTP is bound by residues 458-462 (DTPGH) and 512-515 (NKID). A G4 region spans residues 512-515 (NKID). The tract at residues 548–550 (SAK) is G5.

This sequence belongs to the TRAFAC class translation factor GTPase superfamily. Classic translation factor GTPase family. IF-2 subfamily.

Its subcellular location is the cytoplasm. In terms of biological role, one of the essential components for the initiation of protein synthesis. Protects formylmethionyl-tRNA from spontaneous hydrolysis and promotes its binding to the 30S ribosomal subunits. Also involved in the hydrolysis of GTP during the formation of the 70S ribosomal complex. In Xanthomonas euvesicatoria pv. vesicatoria (strain 85-10) (Xanthomonas campestris pv. vesicatoria), this protein is Translation initiation factor IF-2.